The following is a 47-amino-acid chain: Photosystem II reaction center protein K (47 aa).

Positions 1 to 10 (MAAFTLDLMA) are excised as a propeptide. Residues 20–40 (APAVDVLPLIPIFFFLLVFVW) form a helical membrane-spanning segment.

Belongs to the PsbK family. As to quaternary structure, PSII is composed of 1 copy each of membrane proteins PsbA, PsbB, PsbC, PsbD, PsbE, PsbF, PsbH, PsbI, PsbJ, PsbK, PsbL, PsbM, PsbT, PsbX, PsbY, Psb30/Ycf12, peripheral proteins PsbO, CyanoQ (PsbQ), PsbU, PsbV and a large number of cofactors. It forms dimeric complexes.

It localises to the cellular thylakoid membrane. Functionally, one of the components of the core complex of photosystem II (PSII). PSII is a light-driven water:plastoquinone oxidoreductase that uses light energy to abstract electrons from H(2)O, generating O(2) and a proton gradient subsequently used for ATP formation. It consists of a core antenna complex that captures photons, and an electron transfer chain that converts photonic excitation into a charge separation. The chain is Photosystem II reaction center protein K from Prochlorococcus marinus (strain MIT 9303).